A 1015-amino-acid chain; its full sequence is Transposase for transposon Tn3 (1015 aa).

It belongs to the transposase 7 family.

In terms of biological role, required for transposition of transposon Tn3. In Escherichia coli, this protein is Transposase for transposon Tn3 (tnpA).